The primary structure comprises 729 residues: Ran-binding protein 9 (729 aa).

A compositionally biased stretch (pro residues) spans 1–11; that stretch reads MSGQPPPPPPQ. The segment at 1-137 is disordered; it reads MSGQPPPPPP…SAAAPFPHGD (137 aa). The segment covering 27-49 has biased composition (low complexity); that stretch reads LAPVSGVVLPAPPAVSAGSSPAG. Positions 50-60 are enriched in gly residues; sequence SPGGGAGGEGL. Positions 70–93 are enriched in pro residues; sequence HPPPPPPPATAAPPPPPPPPPPPA. The span at 107-126 shows a compositional bias: low complexity; that stretch reads GLAAGPGPAGGAPTPALVAG. Positions 147–334 constitute a B30.2/SPRY domain; it reads LQRRLKRLYP…VDANFGQHPF (188 aa). Residues 365–397 enclose the LisH domain; sequence WQTMIQKMVSSYLVHHGYCATAEAFARSTDQTV. The interaction with CALB1 stretch occupies residues 401–407; that stretch reads LASIKNR. In terms of domain architecture, CTLH spans 403-460; it reads SIKNRQRIQKLVLAGRMGEAIETTQQLYPSLLERNPNLLFTLKVRQFIEMVNGTDSEV. The residue at position 405 (Lys-405) is an N6-acetyllysine. The segment at 461–489 is disordered; it reads RCLGGRSPKSQDSYPVSPRPFSSPSMSPS. The segment covering 473–489 has biased composition (low complexity); it reads SYPVSPRPFSSPSMSPS. Residues Ser-477 and Ser-487 each carry the phosphoserine modification. The tract at residues 615–729 is interaction with FMR1; it reads AAIERMIHFG…AFATVEDYLH (115 aa).

Belongs to the RANBP9/10 family. In terms of assembly, part of a complex consisting of RANBP9, MKLN1 and GID8. Identified in the CTLH complex that contains GID4, RANBP9 and/or RANBP10, MKLN1, MAEA, RMND5A (or alternatively its paralog RMND5B), GID8, ARMC8, WDR26 and YPEL5. Within this complex, MAEA, RMND5A (or alternatively its paralog RMND5B), GID8, WDR26, and RANBP9 and/or RANBP10 form the catalytic core, while GID4, MKLN1, ARMC8 and YPEL5 have ancillary roles. Interacts with GTP-bound Ran, AR, CDC2L1/p110C, CALB1, S100A7, USP11, MKLN1, SOS1 or SOS2, GID8, and FMR1. Interacts with the Dyrk kinases HIPK2, DYRK1A, and DYRK1B. Interacts with TP73 isoform Alpha but not with TP53. Interacts with the HGF receptor MET and the integrins ITGB1 and ITGB2, but not with ITGAL. Part of a complex consisting of RANBP9, RAN, DYRK1B and COPS5. Directly interacts with RANBP10. Interacts with YPEL5. Interacts with DDX4. Interacts with NGFR. Interacts with TEX19. In terms of processing, phosphorylated in response to stress. Can be phosphorylated by the cleaved p110 form of CDC2L1 (p110C). Ubiquitinated. Polyubiquitination targets the protein for rapid degradation via the ubiquitin system. Can be deubiquitinated by USP11. Ubiquitously expressed, with highest levels in testes, placenta, heart, and muscle, and lowest levels in lung. Within the brain, expressed predominantly by neurons in the gray matter of cortex, the granular layer of cerebellum and the Purkinje cells.

The protein localises to the cytoplasm. The protein resides in the nucleus. It localises to the cell membrane. In terms of biological role, may act as scaffolding protein, and as adapter protein to couple membrane receptors to intracellular signaling pathways. Acts as a mediator of cell spreading and actin cytoskeleton rearrangement. Core component of the CTLH E3 ubiquitin-protein ligase complex that selectively accepts ubiquitin from UBE2H and mediates ubiquitination and subsequent proteasomal degradation of the transcription factor HBP1. May be involved in signaling of ITGB2/LFA-1 and other integrins. Enhances HGF-MET signaling by recruiting Sos and activating the Ras pathway. Enhances dihydrotestosterone-induced transactivation activity of AR, as well as dexamethasone-induced transactivation activity of NR3C1, but not affect estrogen-induced transactivation. Stabilizes TP73 isoform Alpha, probably by inhibiting its ubiquitination, and increases its proapoptotic activity. Inhibits the kinase activity of DYRK1A and DYRK1B. Inhibits FMR1 binding to RNA. This is Ran-binding protein 9 (RANBP9) from Homo sapiens (Human).